The following is a 196-amino-acid chain: Alpha-crystallin A chain (196 aa).

M1 carries the N-acetylmethionine modification. Residues 1-63 (MDVTIQHPWF…RTVLDSGISE (63 aa)) form a required for complex formation with BFSP1 and BFSP2 region. Q6 is modified (deamidated glutamine; partial). Residue S45 is modified to Phosphoserine. Q50 carries the post-translational modification Deamidated glutamine; partial. Positions 76-185 (HAGNPKNNPV…GHSERAIPVS (110 aa)) constitute a sHSP domain. Residues K93 and K122 each carry the N6-acetyllysine modification. Residue H123 coordinates Zn(2+). N124 carries the post-translational modification Deamidated asparagine; partial. E125 and H130 together coordinate Zn(2+). Phosphoserine is present on S145. N146 carries the post-translational modification Deamidated asparagine; partial. The segment at 168-196 (KVQSGLDAGHSERAIPVSREEKPSSAPSS) is disordered. A Deamidated glutamine; partial modification is found at Q170. Basic and acidic residues predominate over residues 176-190 (GHSERAIPVSREEKP). H177 contributes to the Zn(2+) binding site. O-linked (GlcNAc) serine glycosylation occurs at S185.

The protein belongs to the small heat shock protein (HSP20) family. Heteropolymer composed of three CRYAA and one CRYAB subunits. Inter-subunit bridging via zinc ions enhances stability, which is crucial as there is no protein turn over in the lens. Can also form homodimers and homotetramers (dimers of dimers) which serve as the building blocks of homooligomers. Within homooligomers, the zinc-binding motif is created from residues of 3 different molecules. His-123 and Glu-125 from one molecule are ligands of the zinc ion, and His-130 and His-177 residues from additional molecules complete the site with tetrahedral coordination geometry. Part of a complex required for lens intermediate filament formation composed of BFSP1, BFSP2 and CRYAA. In terms of processing, acetylation at Lys-93 may increase chaperone activity. Post-translationally, undergoes age-dependent proteolytical cleavage at the C-terminus.

Its subcellular location is the cytoplasm. It is found in the nucleus. Contributes to the transparency and refractive index of the lens. Acts as a chaperone, preventing aggregation of various proteins under a wide range of stress conditions. Required for the correct formation of lens intermediate filaments as part of a complex composed of BFSP1, BFSP2 and CRYAA. The chain is Alpha-crystallin A chain (Cryaa) from Mus musculus (Mouse).